A 423-amino-acid chain; its full sequence is AP-1 complex subunit mu-2 (423 aa).

One can recognise an MHD domain in the interval 168–421 (KNEVFIDVIE…ITQSGDYQLR (254 aa)).

The protein belongs to the adaptor complexes medium subunit family. In terms of assembly, adaptor protein complex 1 (AP-1) is a heterotetramer composed of two large adaptins (gamma-type subunit AP1G1 and beta-type subunit AP1B1), a medium adaptin (mu-type subunit AP1M1 or AP1M2) and a small adaptin (sigma-type subunit AP1S1 or AP1S2 or AP1S3). Interacts with P2X4. Post-translationally, phosphorylation of membrane-bound AP1M1/AP1M2 increases its affinity for sorting signals.

The protein resides in the golgi apparatus. It is found in the cytoplasmic vesicle. The protein localises to the clathrin-coated vesicle membrane. In terms of biological role, subunit of clathrin-associated adaptor protein complex 1 that plays a role in protein sorting in the trans-Golgi network (TGN) and endosomes. The AP complexes mediate the recruitment of clathrin to membranes and the recognition of sorting signals within the cytosolic tails of transmembrane cargo molecules. The chain is AP-1 complex subunit mu-2 (Ap1m2) from Rattus norvegicus (Rat).